We begin with the raw amino-acid sequence, 187 residues long: Peptidyl-tRNA hydrolase (187 aa).

Position 14 (Tyr14) interacts with tRNA. His19 functions as the Proton acceptor in the catalytic mechanism. Tyr63 and Asn65 together coordinate tRNA.

This sequence belongs to the PTH family. As to quaternary structure, monomer.

Its subcellular location is the cytoplasm. It carries out the reaction an N-acyl-L-alpha-aminoacyl-tRNA + H2O = an N-acyl-L-amino acid + a tRNA + H(+). In terms of biological role, hydrolyzes ribosome-free peptidyl-tRNAs (with 1 or more amino acids incorporated), which drop off the ribosome during protein synthesis, or as a result of ribosome stalling. Catalyzes the release of premature peptidyl moieties from peptidyl-tRNA molecules trapped in stalled 50S ribosomal subunits, and thus maintains levels of free tRNAs and 50S ribosomes. This Thermodesulfovibrio yellowstonii (strain ATCC 51303 / DSM 11347 / YP87) protein is Peptidyl-tRNA hydrolase.